The chain runs to 377 residues: N5-carboxyaminoimidazole ribonucleotide synthase (377 aa).

ATP is bound by residues R93, K133, 138 to 144 (GYDGKGQ), 175 to 178 (EEFV), E183, H206, and 257 to 258 (NE). The ATP-grasp domain occupies 97–287 (KALLDRAQVA…QFENHLRAVC (191 aa)).

This sequence belongs to the PurK/PurT family. In terms of assembly, homodimer.

It carries out the reaction 5-amino-1-(5-phospho-beta-D-ribosyl)imidazole + hydrogencarbonate + ATP = 5-carboxyamino-1-(5-phospho-D-ribosyl)imidazole + ADP + phosphate + 2 H(+). It participates in purine metabolism; IMP biosynthesis via de novo pathway; 5-amino-1-(5-phospho-D-ribosyl)imidazole-4-carboxylate from 5-amino-1-(5-phospho-D-ribosyl)imidazole (N5-CAIR route): step 1/2. In terms of biological role, catalyzes the ATP-dependent conversion of 5-aminoimidazole ribonucleotide (AIR) and HCO(3)(-) to N5-carboxyaminoimidazole ribonucleotide (N5-CAIR). This chain is N5-carboxyaminoimidazole ribonucleotide synthase, found in Vibrio cholerae serotype O1 (strain ATCC 39315 / El Tor Inaba N16961).